The primary structure comprises 115 residues: Photosystem II reaction center Psb28 protein (115 aa).

It belongs to the Psb28 family. In terms of assembly, part of the photosystem II complex.

It localises to the plastid. It is found in the chloroplast thylakoid membrane. In Pyropia yezoensis (Susabi-nori), this protein is Photosystem II reaction center Psb28 protein.